Reading from the N-terminus, the 246-residue chain is Carboxy-S-adenosyl-L-methionine synthase (246 aa).

Residues tyrosine 39, 64–66 (GCS), 89–90 (DN), 121–122 (DI), asparagine 136, and arginine 203 contribute to the S-adenosyl-L-methionine site.

The protein belongs to the class I-like SAM-binding methyltransferase superfamily. Cx-SAM synthase family. As to quaternary structure, homodimer.

It carries out the reaction prephenate + S-adenosyl-L-methionine = carboxy-S-adenosyl-L-methionine + 3-phenylpyruvate + H2O. Its function is as follows. Catalyzes the conversion of S-adenosyl-L-methionine (SAM) to carboxy-S-adenosyl-L-methionine (Cx-SAM). This is Carboxy-S-adenosyl-L-methionine synthase from Pseudomonas aeruginosa (strain UCBPP-PA14).